The following is a 378-amino-acid chain: Beta sliding clamp (378 aa).

This sequence belongs to the beta sliding clamp family. As to quaternary structure, forms a ring-shaped head-to-tail homodimer around DNA which binds and tethers DNA polymerases and other proteins to the DNA. The DNA replisome complex has a single clamp-loading complex (3 tau and 1 each of delta, delta', psi and chi subunits) which binds 3 Pol III cores (1 core on the leading strand and 2 on the lagging strand) each with a beta sliding clamp dimer. Additional proteins in the replisome are other copies of gamma, psi and chi, Ssb, DNA helicase and RNA primase.

Its subcellular location is the cytoplasm. Functionally, confers DNA tethering and processivity to DNA polymerases and other proteins. Acts as a clamp, forming a ring around DNA (a reaction catalyzed by the clamp-loading complex) which diffuses in an ATP-independent manner freely and bidirectionally along dsDNA. Initially characterized for its ability to contact the catalytic subunit of DNA polymerase III (Pol III), a complex, multichain enzyme responsible for most of the replicative synthesis in bacteria; Pol III exhibits 3'-5' exonuclease proofreading activity. The beta chain is required for initiation of replication as well as for processivity of DNA replication. The sequence is that of Beta sliding clamp (dnaN) from Streptococcus pneumoniae (strain ATCC BAA-255 / R6).